A 512-amino-acid chain; its full sequence is MVATIMQTTTTVLTTVAAMSTTLASNYISSQASSSTSVTTVTTIATSIRSTPSNLLFSNVAAQPKSSSASTIGLSIGLPIGIFCFGLLILLCYFYLKRNSVSISNPPMSATIPREEEYCRRTNWFSRLFWQSKCEDQNSYSNRDIEKYNDTQWTSGDNMSSKIQYKISKPIIPQHILTPKKTVKNPYAWSGKNISLDPKVNEMEEEKVVDAFLYTKPPNIVHIESSMPSYNDLPSQKTVSSKKTALKTSEKWSYESPLSRWFLRGSTYFKDYGLSKTSLKTPTGAPQLKQMKMLSRISKGYFNESDIMPDERSPILEYNNTPLDANDSVNNLGNTTPDSQITSYRNNNIDLITARPHSVIYGTTAQQTLETNFNDHHDCNKSTEKHELIIPTPSKPLKKRKKRRQSKMYQHLQHLSRSKPLPLTPNSKYNGEASVQLGKTYTVIQDYEPRLTDEIRISLGEKVKILATHTDGWCLVEKCNTQKGSIHVSVDDKRYLNEDRGIVPGDCLQEYD.

Residues 72–96 form a helical membrane-spanning segment; the sequence is IGLSIGLPIGIFCFGLLILLCYFYL. A hydrophilic region spans residues 97–512; the sequence is KRNSVSISNP…VPGDCLQEYD (416 aa). T178 bears the Phosphothreonine mark. Residues S190 and S256 each carry the phosphoserine modification. T281 and T424 each carry phosphothreonine. Positions 436–512 constitute an SH3 domain; the sequence is QLGKTYTVIQ…VPGDCLQEYD (77 aa).

Post-translationally, O-glycosylated.

The protein localises to the membrane. In terms of biological role, required for cell fusion. Negatively regulates Sho1p signaling to ensure efficient cell fusion. Functionally, interacts with SHO1. The protein is Nuclear fusion protein FUS1 (FUS1) of Saccharomyces cerevisiae (strain ATCC 204508 / S288c) (Baker's yeast).